Reading from the N-terminus, the 78-residue chain is Exodeoxyribonuclease 7 small subunit (78 aa).

The protein belongs to the XseB family. As to quaternary structure, heterooligomer composed of large and small subunits.

The protein resides in the cytoplasm. The catalysed reaction is Exonucleolytic cleavage in either 5'- to 3'- or 3'- to 5'-direction to yield nucleoside 5'-phosphates.. Bidirectionally degrades single-stranded DNA into large acid-insoluble oligonucleotides, which are then degraded further into small acid-soluble oligonucleotides. The chain is Exodeoxyribonuclease 7 small subunit from Idiomarina loihiensis (strain ATCC BAA-735 / DSM 15497 / L2-TR).